The following is a 380-amino-acid chain: Alkanesulfonate monooxygenase (380 aa).

It belongs to the SsuD family. Homotetramer.

The enzyme catalyses an alkanesulfonate + FMNH2 + O2 = an aldehyde + FMN + sulfite + H2O + 2 H(+). Functionally, catalyzes the desulfonation of aliphatic sulfonates. This chain is Alkanesulfonate monooxygenase, found in Pectobacterium carotovorum subsp. carotovorum (strain PC1).